The following is a 498-amino-acid chain: MRINPTTSDPGVSTLEKKNLGRIAQIIGPVLDVAFPPGKMPNIYNALIVKGRDTAGQPMNVTCEVQQLLGNNRVRAVAMSATDGLTRGMEVIDTGAPLSVPVGGATLGRIFNVLGEPVDNLGPVDTRTTSPIHRSAPAFTQLDTKLSIFETGIKVVDLLAPYRRGGKIGLFGGAGVGKTVLIMELINNIAKAHGGVSVFGGVGERTREGNDLYMEMKESGVINEQNIAESKVALVYGQMNEPPGARMRVGLTALTMAEYFRDVNEQDVLLFIDNIFRFVQAGSEVSALLGRMPSAVGYQPTLSTEMGSLQERITSTKEGSITSIQAVYVPADDLTDPAPATTFAHLDATTVLSRGLAAKGIYPAVDPLDSTSTMLQPRIVGEEHYEIAQRVKETLQRYKELQDIIAILGLDELSEEDRLTVARARKIERFLSQPFFVAEVFTGSPGKYVGLAETIRGFQLILSGELDSLPEQAFYLVGNIDEATAKAMNLEMESKLKK.

Position 172–179 (172–179) interacts with ATP; that stretch reads GGAGVGKT.

The protein belongs to the ATPase alpha/beta chains family. F-type ATPases have 2 components, CF(1) - the catalytic core - and CF(0) - the membrane proton channel. CF(1) has five subunits: alpha(3), beta(3), gamma(1), delta(1), epsilon(1). CF(0) has four main subunits: a(1), b(1), b'(1) and c(9-12).

Its subcellular location is the plastid. The protein localises to the chloroplast thylakoid membrane. The enzyme catalyses ATP + H2O + 4 H(+)(in) = ADP + phosphate + 5 H(+)(out). Its function is as follows. Produces ATP from ADP in the presence of a proton gradient across the membrane. The catalytic sites are hosted primarily by the beta subunits. This Spinacia oleracea (Spinach) protein is ATP synthase subunit beta, chloroplastic.